Here is a 26-residue protein sequence, read N- to C-terminus: Metallothionein (26 aa).

Over residues 1–14 (MGDCGCSGASSCNC) the composition is skewed to low complexity. Residues 1-26 (MGDCGCSGASSCNCGSGCSCSNCGSK) are disordered. Cu(+) is bound by residues cysteine 4, cysteine 6, cysteine 12, cysteine 14, cysteine 18, cysteine 20, and cysteine 23. Residues 15-26 (GSGCSCSNCGSK) show a composition bias toward cys residues.

Belongs to the metallothionein superfamily. Type 8 family.

This chain is Metallothionein (cmt), found in Neurospora crassa (strain ATCC 24698 / 74-OR23-1A / CBS 708.71 / DSM 1257 / FGSC 987).